Here is a 217-residue protein sequence, read N- to C-terminus: Somatotropin (217 aa).

Residues 1–24 form the signal peptide; sequence MAAGSWTSLLLAFTLLCLPQLREA. His-44 provides a ligand contact to Zn(2+). A disulfide bond links Cys-79 and Cys-191. At Ser-132 the chain carries Phosphoserine. Glu-200 provides a ligand contact to Zn(2+). The cysteines at positions 208 and 215 are disulfide-linked.

It belongs to the somatotropin/prolactin family.

It is found in the secreted. Functionally, plays an important role in growth control. Its major role in stimulating body growth is to stimulate the liver and other tissues to secrete IGF1. It stimulates both the differentiation and proliferation of myoblasts. It also stimulates amino acid uptake and protein synthesis in muscle and other tissues. The polypeptide is Somatotropin (GH1) (Callithrix jacchus (White-tufted-ear marmoset)).